Consider the following 104-residue polypeptide: Alpha-amylase inhibitor HOE-467A (104 aa).

An N-terminal signal peptide occupies residues 1 to 30; sequence MRVRALRLAALVGAGAALALSPLAAGPASA. Disulfide bonds link Cys41–Cys57 and Cys75–Cys103.

In terms of biological role, inhibits mammalian alpha-amylases specifically but has no action on plant and microbial alpha-amylases. Forms a tight stoichiometric 1:1 complex with alpha-amylase. In Streptomyces tendae, this protein is Alpha-amylase inhibitor HOE-467A.